The chain runs to 308 residues: D-alanine--D-alanine ligase B (308 aa).

The ATP-grasp domain occupies 102 to 302 (KKIVKTVGVP…FGELLSWMVE (201 aa)). 128–183 (PMKPPYVIKPVNEGSSFGVVIVSEGQSHPPQVVGSSEWKYGDTVMVERYIHGRELT) provides a ligand contact to ATP. Mg(2+)-binding residues include Asp-252, Glu-269, and Asn-271.

This sequence belongs to the D-alanine--D-alanine ligase family. It depends on Mg(2+) as a cofactor. Mn(2+) serves as cofactor.

Its subcellular location is the cytoplasm. The catalysed reaction is 2 D-alanine + ATP = D-alanyl-D-alanine + ADP + phosphate + H(+). It participates in cell wall biogenesis; peptidoglycan biosynthesis. Its function is as follows. Cell wall formation. This chain is D-alanine--D-alanine ligase B, found in Mesorhizobium japonicum (strain LMG 29417 / CECT 9101 / MAFF 303099) (Mesorhizobium loti (strain MAFF 303099)).